The chain runs to 165 residues: MKAPFRIGQGFDVHALVPGRALIVGGVHIPFERGLLGHSDADVLLHALTDALLGAAGLGDIGRLFPDTDAAHAGADSRVLLREAFAAVRAAGFGVVNVDATVICRAPRILPHAPAMVANIAADLGIDAAAVNIKGKTTEKLGFTGRGEGIAAQVVALLMRHGDET.

A divalent metal cation-binding residues include D12 and H14. 4-CDP-2-C-methyl-D-erythritol 2-phosphate is bound by residues 12-14 (DVH) and 38-39 (HS). H46 is an a divalent metal cation binding site. Residues 60-62 (DIG), 65-69 (FPDTD), F143, and R146 contribute to the 4-CDP-2-C-methyl-D-erythritol 2-phosphate site.

This sequence belongs to the IspF family. Homotrimer. The cofactor is a divalent metal cation.

It carries out the reaction 4-CDP-2-C-methyl-D-erythritol 2-phosphate = 2-C-methyl-D-erythritol 2,4-cyclic diphosphate + CMP. Its pathway is isoprenoid biosynthesis; isopentenyl diphosphate biosynthesis via DXP pathway; isopentenyl diphosphate from 1-deoxy-D-xylulose 5-phosphate: step 4/6. Involved in the biosynthesis of isopentenyl diphosphate (IPP) and dimethylallyl diphosphate (DMAPP), two major building blocks of isoprenoid compounds. Catalyzes the conversion of 4-diphosphocytidyl-2-C-methyl-D-erythritol 2-phosphate (CDP-ME2P) to 2-C-methyl-D-erythritol 2,4-cyclodiphosphate (ME-CPP) with a corresponding release of cytidine 5-monophosphate (CMP). This Aromatoleum aromaticum (strain DSM 19018 / LMG 30748 / EbN1) (Azoarcus sp. (strain EbN1)) protein is 2-C-methyl-D-erythritol 2,4-cyclodiphosphate synthase.